Reading from the N-terminus, the 129-residue chain is Large ribosomal subunit protein uL22 (129 aa).

The protein belongs to the universal ribosomal protein uL22 family. As to quaternary structure, part of the 50S ribosomal subunit.

This protein binds specifically to 23S rRNA; its binding is stimulated by other ribosomal proteins, e.g. L4, L17, and L20. It is important during the early stages of 50S assembly. It makes multiple contacts with different domains of the 23S rRNA in the assembled 50S subunit and ribosome. In terms of biological role, the globular domain of the protein is located near the polypeptide exit tunnel on the outside of the subunit, while an extended beta-hairpin is found that lines the wall of the exit tunnel in the center of the 70S ribosome. This chain is Large ribosomal subunit protein uL22, found in Agrobacterium fabrum (strain C58 / ATCC 33970) (Agrobacterium tumefaciens (strain C58)).